Reading from the N-terminus, the 303-residue chain is uncharacterized protein (303 aa).

Residues 183-281 (KDILFYLNNN…GCSPSDYRRQ (99 aa)) enclose the HTH araC/xylS-type domain. 2 DNA-binding regions (H-T-H motif) span residues 200-221 (EQLSKKFRASVSYICHEFTKEY) and 248-271 (QAEISWRVGYENVDHFAKLFLRHV).

This is an uncharacterized protein from Escherichia coli (strain K12).